Reading from the N-terminus, the 190-residue chain is Cancer-related nucleoside-triphosphatase homolog (190 aa).

A2 carries the N-acetylalanine modification. ATP contacts are provided by residues 9–16 (GPPGVGKT) and 109–116 (ICVIDEVG). K165 bears the N6-acetyllysine mark.

The protein belongs to the THEP1 NTPase family. In terms of assembly, monomer.

It carries out the reaction a ribonucleoside 5'-triphosphate + H2O = a ribonucleoside 5'-diphosphate + phosphate + H(+). It catalyses the reaction 5-methyl-UTP + H2O = 5-methyl-UDP + phosphate + H(+). The catalysed reaction is CTP + H2O = CDP + phosphate + H(+). The enzyme catalyses ATP + H2O = ADP + phosphate + H(+). It carries out the reaction GTP + H2O = GDP + phosphate + H(+). In terms of biological role, has nucleotide phosphatase activity towards ATP, GTP, CTP, TTP and UTP. Hydrolyzes nucleoside diphosphates with lower efficiency. This is Cancer-related nucleoside-triphosphatase homolog (NTPCR) from Bos taurus (Bovine).